A 643-amino-acid chain; its full sequence is 1-deoxy-D-xylulose-5-phosphate synthase (643 aa).

Residues His78 and Ala119–Ser121 each bind thiamine diphosphate. Asp150 serves as a coordination point for Mg(2+). Residues Gly151–Ser152, Asn179, Tyr288, and Glu370 contribute to the thiamine diphosphate site. Mg(2+) is bound at residue Asn179.

Belongs to the transketolase family. DXPS subfamily. Homodimer. The cofactor is Mg(2+). Requires thiamine diphosphate as cofactor.

The catalysed reaction is D-glyceraldehyde 3-phosphate + pyruvate + H(+) = 1-deoxy-D-xylulose 5-phosphate + CO2. Its pathway is metabolic intermediate biosynthesis; 1-deoxy-D-xylulose 5-phosphate biosynthesis; 1-deoxy-D-xylulose 5-phosphate from D-glyceraldehyde 3-phosphate and pyruvate: step 1/1. Catalyzes the acyloin condensation reaction between C atoms 2 and 3 of pyruvate and glyceraldehyde 3-phosphate to yield 1-deoxy-D-xylulose-5-phosphate (DXP). This chain is 1-deoxy-D-xylulose-5-phosphate synthase, found in Brucella suis (strain ATCC 23445 / NCTC 10510).